A 398-amino-acid polypeptide reads, in one-letter code: MDVDRLQEALKDFEKRGKKDVSPELDQFLCHVAKTGETVVQWPQFKEYFLFKLEKVMDDFRTSAPEQRGPPNPNVEYIPFDEMKQRILKIVASFNGTPFTIQRLCELLTDPRRNYTGTDKFLRGVEKNIMVVSCVYPSSEKNTSPSLNRMNGVMFPSNSQSYTDRSNVNGPGTPRPTNRPKFTLSSPMNTNGLPDSMENKESDLQQKEKSLSDSAVFDDGSQATTPKNKHSAEDSVEAEEHEVKRLKFDTEEDEEAACANPDASSEVSTEMAEEAECASTSADKGKESCQTAQTADEESLMTASESTEVECNERDSETVSVSEESSEESHQMEESEQSESACSLNSEEPNSAAAAASTAGTDSSEGNIGIKSTEILSLSPMENSEEATNAPEEPMEQD.

Positions 138-398 (SSEKNTSPSL…NAPEEPMEQD (261 aa)) are disordered. Composition is skewed to polar residues over residues 139-149 (SEKNTSPSLNR), 156-170 (PSNSQSYTDRSNVNG), and 183-193 (TLSSPMNTNGL). Basic and acidic residues predominate over residues 197–211 (MENKESDLQQKEKSL). Over residues 278–294 (ASTSADKGKESCQTAQT) the composition is skewed to polar residues. Over residues 338–366 (SESACSLNSEEPNSAAAAASTAGTDSSEG) the composition is skewed to low complexity.

It belongs to the PPP4R2 family. As to quaternary structure, serine/threonine-protein phosphatase 4 (PP4) occurs in different assemblies of the catalytic and one or more regulatory subunits.

In terms of biological role, regulatory subunit of serine/threonine-protein phosphatase 4 (PP4). This chain is Serine/threonine-protein phosphatase 4 regulatory subunit 2-B (ppp4r2-b), found in Xenopus laevis (African clawed frog).